The chain runs to 70 residues: ATP synthase subunit c (70 aa).

2 consecutive transmembrane segments (helical) span residues 4 to 24 (IATA…NGLI) and 47 to 67 (FIGI…GFLL).

Belongs to the ATPase C chain family. In terms of assembly, F-type ATPases have 2 components, F(1) - the catalytic core - and F(0) - the membrane proton channel. F(1) has five subunits: alpha(3), beta(3), gamma(1), delta(1), epsilon(1). F(0) has three main subunits: a(1), b(2) and c(10-14). The alpha and beta chains form an alternating ring which encloses part of the gamma chain. F(1) is attached to F(0) by a central stalk formed by the gamma and epsilon chains, while a peripheral stalk is formed by the delta and b chains.

The protein localises to the cell membrane. In terms of biological role, f(1)F(0) ATP synthase produces ATP from ADP in the presence of a proton or sodium gradient. F-type ATPases consist of two structural domains, F(1) containing the extramembraneous catalytic core and F(0) containing the membrane proton channel, linked together by a central stalk and a peripheral stalk. During catalysis, ATP synthesis in the catalytic domain of F(1) is coupled via a rotary mechanism of the central stalk subunits to proton translocation. Functionally, key component of the F(0) channel; it plays a direct role in translocation across the membrane. A homomeric c-ring of between 10-14 subunits forms the central stalk rotor element with the F(1) delta and epsilon subunits. The chain is ATP synthase subunit c from Exiguobacterium sibiricum (strain DSM 17290 / CCUG 55495 / CIP 109462 / JCM 13490 / 255-15).